The primary structure comprises 200 residues: GTP cyclohydrolase-2 (200 aa).

A GTP-binding site is contributed by 49–53 (RVHSE). Positions 54, 65, and 67 each coordinate Zn(2+). GTP is bound by residues Q70, 92–94 (EGR), and T114. Residue D126 is the Proton acceptor of the active site. The active-site Nucleophile is R128. Positions 149 and 154 each coordinate GTP.

This sequence belongs to the GTP cyclohydrolase II family. Homodimer. The cofactor is Zn(2+).

The enzyme catalyses GTP + 4 H2O = 2,5-diamino-6-hydroxy-4-(5-phosphoribosylamino)-pyrimidine + formate + 2 phosphate + 3 H(+). It participates in cofactor biosynthesis; riboflavin biosynthesis; 5-amino-6-(D-ribitylamino)uracil from GTP: step 1/4. Its function is as follows. Catalyzes the conversion of GTP to 2,5-diamino-6-ribosylamino-4(3H)-pyrimidinone 5'-phosphate (DARP), formate and pyrophosphate. This chain is GTP cyclohydrolase-2, found in Klebsiella pneumoniae subsp. pneumoniae (strain ATCC 700721 / MGH 78578).